A 383-amino-acid chain; its full sequence is MSPEVALNRISPMLSPFISSVVRNGKVGLDATNCLRITDLKSGCTSLTPGPNCDRFKLHIPYAGETLKWDIIFNAQYPELPPDFIFGEDAEFLPDPSALQNLASWNPSNPECLLLVVKELVQQYHQFQCSRLRESSRLMFEYQTLLEEPQYGENMEIYAGKKNNWTGEFSARFLLKLPVDFSNIPTYLLKDVNEDPGEDVALLSVSFEDTEATQVYPKLYLSPRIEHALGGSSALHIPAFPGGGCLIDYVPQVCHLLTNKVQYVIQGYHKRREYIAAFLSHFGTGVVEYDAEGFTKLTLLLMWKDFCFLVHIDLPLFFPRDQPTLTFQSVYHFTNSGQLYSQAQKNYPYSPRWDGNEMAKRAKAYFKTFVPQFQEAAFANGKL.

Met-1 carries the N-acetylmethionine modification. Ser-2 carries the post-translational modification Phosphoserine. 2 UEV-like regions span residues 30–147 (DATN…TLLE) and 275–364 (IAAF…RAKA).

Belongs to the BABAM2 family. In terms of assembly, component of the ARISC complex, at least composed of UIMC1/RAP80, ABRAXAS1, BRCC3/BRCC36, BABAM2 and BABAM1/NBA1. Component of the BRCA1-A complex, at least composed of BRCA1, BARD1, UIMC1/RAP80, ABRAXAS1, BRCC3/BRCC36, BABAM2 and BABAM1/NBA1. In the BRCA1-A complex, interacts directly with ABRAXAS1, BRCC3/BRCC36 and BABAM1/NBA1. Binds polyubiquitin. Component of the BRISC complex, at least composed of ABRAXAS2, BRCC3/BRCC36, BABAM2 and BABAM1/NBA1. Identified in a complex with SHMT2 and the other subunits of the BRISC complex. Component of the BRCA1/BRCA2 containing complex (BRCC), which also contains BRCA1, BRCA2, BARD1, BRCC3/BRCC36 and RAD51. BRCC is a ubiquitin E3 ligase complex that enhances cellular survival following DNA damage. May interact with FAS and TNFRSF1A. Expressed in all cell lines examined. Highly expressed in placenta.

It is found in the cytoplasm. It localises to the nucleus. Component of the BRCA1-A complex, a complex that specifically recognizes 'Lys-63'-linked ubiquitinated histones H2A and H2AX at DNA lesions sites, leading to target the BRCA1-BARD1 heterodimer to sites of DNA damage at double-strand breaks (DSBs). The BRCA1-A complex also possesses deubiquitinase activity that specifically removes 'Lys-63'-linked ubiquitin on histones H2A and H2AX. In the BRCA1-A complex, it acts as an adapter that bridges the interaction between BABAM1/NBA1 and the rest of the complex, thereby being required for the complex integrity and modulating the E3 ubiquitin ligase activity of the BRCA1-BARD1 heterodimer. Component of the BRISC complex, a multiprotein complex that specifically cleaves 'Lys-63'-linked ubiquitin in various substrates. Within the BRISC complex, acts as an adapter that bridges the interaction between BABAM1/NBA1 and the rest of the complex, thereby being required for the complex integrity. The BRISC complex is required for normal mitotic spindle assembly and microtubule attachment to kinetochores via its role in deubiquitinating NUMA1. The BRISC complex plays a role in interferon signaling via its role in the deubiquitination of the interferon receptor IFNAR1; deubiquitination increases IFNAR1 activity by enhancing its stability and cell surface expression. Down-regulates the response to bacterial lipopolysaccharide (LPS) via its role in IFNAR1 deubiquitination. May play a role in homeostasis or cellular differentiation in cells of neural, epithelial and germline origins. May also act as a death receptor-associated anti-apoptotic protein, which inhibits the mitochondrial apoptotic pathway. May regulate TNF-alpha signaling through its interactions with TNFRSF1A; however these effects may be indirect. The protein is BRISC and BRCA1-A complex member 2 of Homo sapiens (Human).